Reading from the N-terminus, the 205-residue chain is Troponin I, cardiac muscle (205 aa).

The disordered stretch occupies residues 1–38; that stretch reads MADQSGNAAPPPVRRRSSANYRAYATEPHAKKKSKISA. Ala-2 carries the post-translational modification N-acetylalanine. Position 5 is a phosphoserine (Ser-5). Phosphoserine; by PKA and PKD/PRKD1 occurs at positions 17 and 18. Residue Tyr-21 is modified to Phosphotyrosine. Position 26 is a phosphothreonine; by STK4/MST1 (Thr-26). The involved in binding TNC stretch occupies residues 27-74; that stretch reads EPHAKKKSKISASRKLQLKTLMLQIAKQELEREAVERRGEKGRALSTR. Residues Ser-37 and Ser-39 each carry the phosphoserine; by PKC/PRKCE modification. At Thr-46 the chain carries Phosphothreonine; by STK4/MST1. Ser-72 is subject to Phosphoserine. The residue at position 73 (Thr-73) is a Phosphothreonine. The involved in binding TNC and actin stretch occupies residues 124–145; the sequence is NQKIFDLRGKFKRPTLRRVRIS. Thr-138 bears the Phosphothreonine; by STK4/MST1 mark. Ser-145 carries the post-translational modification Phosphoserine; by PAK3. A Phosphothreonine modification is found at Thr-176. Position 194 is a phosphoserine (Ser-194).

This sequence belongs to the troponin I family. Binds to actin and tropomyosin. Interacts with TRIM63. Interacts with STK4/MST1. In terms of processing, phosphorylated at Ser-17 and Ser-18 by PRKD1; phosphorylation reduces myofilament calcium sensitivity. Phosphorylated preferentially at Thr-26. Phosphorylation by STK4/MST1 alters its binding affinity to TNNC1 (cardiac Tn-C) and TNNT2 (cardiac Tn-T). Phosphorylated at Ser-37 and Ser-39 by PRKCE; phosphorylation increases myocardium contractile dysfunction.

In terms of biological role, troponin I is the inhibitory subunit of troponin, the thin filament regulatory complex which confers calcium-sensitivity to striated muscle actomyosin ATPase activity. The protein is Troponin I, cardiac muscle (TNNI3) of Equus caballus (Horse).